We begin with the raw amino-acid sequence, 341 residues long: MEEAIRSLQQEISDFGIQSNKDLEAFRLKYTVRKGLIADLFGQLKTVAPDERPRIGQLLNTLKKNADEKQTAAEAVFSAQAARKAPALDLTLPGRRHYTGSEHPVQKVLGDMKQIFHAMGFSIATGPELELDRYNFDLLNFPPDHPARDMQDTFFITRGNPSGDVLLRTHTSPVQVRVMLDNPPPIRVICPGKVYRNEAISSRSYCVFHQLEGLYIDKNVSFADLKATIFSFARQMFGKDVKLRFRPSFFPFTEPSAEVDVTCYLCGGKGCRVCKKSGWLEIMGCGMVHPNVMRDCGIDPEVWSGYAFGMGVDRTVLLRYKIDDIRLLFENDIRMLRQFPA.

Residue glutamate 254 coordinates Mg(2+).

Belongs to the class-II aminoacyl-tRNA synthetase family. Phe-tRNA synthetase alpha subunit type 1 subfamily. Tetramer of two alpha and two beta subunits. Mg(2+) serves as cofactor.

It is found in the cytoplasm. It catalyses the reaction tRNA(Phe) + L-phenylalanine + ATP = L-phenylalanyl-tRNA(Phe) + AMP + diphosphate + H(+). This chain is Phenylalanine--tRNA ligase alpha subunit, found in Chlorobium limicola (strain DSM 245 / NBRC 103803 / 6330).